The following is a 406-amino-acid chain: Lysophospholipid transporter LplT (406 aa).

Transmembrane regions (helical) follow at residues 16 to 36 (MVAV…LLFA), 53 to 73 (ILQM…GQIA), 91 to 111 (AGAL…LVGV), 139 to 159 (MMEA…GILA), 164 to 184 (MAAL…NLFI), 227 to 247 (LFWG…PVAL), 253 to 273 (ATPT…AGAA), 285 to 305 (CLPA…QNSM), 310 to 330 (LLLI…NALL), 349 to 369 (LGEN…VKLG), and 372 to 392 (VVAV…LLWG).

It belongs to the major facilitator superfamily. LplT (TC 2.A.1.42) family.

The protein resides in the cell inner membrane. Catalyzes the facilitated diffusion of 2-acyl-glycero-3-phosphoethanolamine (2-acyl-GPE) into the cell. In Yersinia pestis bv. Antiqua (strain Antiqua), this protein is Lysophospholipid transporter LplT.